The sequence spans 312 residues: Malate dehydrogenase (312 aa).

Residues 7–13 (GAAGGIG) and aspartate 34 each bind NAD(+). Positions 81 and 87 each coordinate substrate. NAD(+)-binding positions include asparagine 94 and 117–119 (ITN). Substrate-binding residues include asparagine 119 and arginine 153. Catalysis depends on histidine 177, which acts as the Proton acceptor. Methionine 228 lines the NAD(+) pocket.

It belongs to the LDH/MDH superfamily. MDH type 1 family. Homodimer.

It catalyses the reaction (S)-malate + NAD(+) = oxaloacetate + NADH + H(+). Its function is as follows. Catalyzes the reversible oxidation of malate to oxaloacetate. The sequence is that of Malate dehydrogenase from Mannheimia succiniciproducens (strain KCTC 0769BP / MBEL55E).